A 570-amino-acid polypeptide reads, in one-letter code: MSEKHPGPLVVEGKLTDAERMKLESNYLRGTIAEDLNDGLTGGFKGDNFLLIRFHGMYQQDDRDIRAERAEQKLEPRHAMLLRCRLPGGVITTKQWQAIDKFAGENTIYGSIRLTNRQTFQFHGILKKNVKPVHQMLHSVGLDALATANDMNRNVLCTSNPYESQLHAEAYEWAKKISEHLLPRTRAYAEIWLDQEKVATTDEEPILGQTYLPRKFKTTVVIPPQNDIDLHANDMNFVAIAENGKLVGFNLLVGGGLSIEHGNKKTYARTASEFGYLPLEHTLAVAEAVVTTQRDWGNRTDRKNAKTKYTLERVGVETFKAEVERRAGIKFEPIRPYEFTGRGDRIGWVKGIDDNWHLTLFIENGRILDYPGRPLKTGLLEIAKIHKGDFRITANQNLIIAGVPESEKAKIEKIAKESGLMNAVTPQRENSMACVSFPTCPLAMAEAERFLPSFIDNIDNLMAKHGVSDEHIVMRVTGCPNGCGRAMLAEVGLVGKAPGRYNLHLGGNRIGTRIPRMYKENITEPEILASLDELIGRWAKEREVGEGFGDFTVRAGIIRPVLDPARDLWD.

4 residues coordinate [4Fe-4S] cluster: C434, C440, C479, and C483. C483 lines the siroheme pocket.

It belongs to the nitrite and sulfite reductase 4Fe-4S domain family. Alpha(8)-beta(8). The alpha component is a flavoprotein, the beta component is a hemoprotein. Siroheme is required as a cofactor. [4Fe-4S] cluster serves as cofactor.

It catalyses the reaction hydrogen sulfide + 3 NADP(+) + 3 H2O = sulfite + 3 NADPH + 4 H(+). It participates in sulfur metabolism; hydrogen sulfide biosynthesis; hydrogen sulfide from sulfite (NADPH route): step 1/1. Functionally, component of the sulfite reductase complex that catalyzes the 6-electron reduction of sulfite to sulfide. This is one of several activities required for the biosynthesis of L-cysteine from sulfate. This chain is Sulfite reductase [NADPH] hemoprotein beta-component, found in Escherichia coli O1:K1 / APEC.